Reading from the N-terminus, the 921-residue chain is Retinoblastoma-associated protein (921 aa).

Positions 1-36 (MPPKAPRRAAAAEPPPPPPPPPREDDPAQDSGPEEL) are disordered. P2 is subject to N,N-dimethylproline; by NTM1. Phosphoserine is present on residues S31 and S243. A phosphothreonine mark is found at T246, T350, T364, and T367. The segment at 341 to 360 (PIDSFETERTPRKNNPDEEA) is disordered. Residues 346 to 356 (ETERTPRKNNP) are compositionally biased toward basic and acidic residues. Residues 367-573 (TPVRTVMNTI…FDLIKQSKDG (207 aa)) form a domain A region. The segment at 367–764 (TPVRTVMNTI…QRLKTNILQY (398 aa)) is pocket; binds T and E1A. S561 is subject to Phosphoserine; by CDK2. Residues 574–632 (EGPDNLEPACPLSLPLQGNHTAADMYLSPLRSPKKRTSTTRVNSAANTETQAASAFHTQ) form a spacer region. A phosphoserine mark is found at S601, S605, and S617. The interval 633 to 764 (KPLKSTSLAL…QRLKTNILQY (132 aa)) is domain B. The tract at residues 756-921 (RLKTNILQYA…SKDVSNKEEK (166 aa)) is interaction with LIMD1. Residues 764-921 (YASTRPPTLS…SKDVSNKEEK (158 aa)) are domain; mediates interaction with E4F1. Phosphoserine is present on residues S773, S781, S788, and S800. K803 is subject to N6-methyllysine; by SMYD2. S804 carries the post-translational modification Phosphoserine. A phosphothreonine mark is found at T814, T816, T819, and T834. Position 848 is a phosphoserine (S848). At K853 the chain carries N6-methyllysine; by SMYD2. Positions 853–869 (KRSAEGGNPPKPLKKLR) match the Bipartite nuclear localization signal motif. N6-acetyllysine; by PCAF occurs at positions 866 and 867. Residues 872–921 (IEGADEADGSKHLPAESKFQQKLAEMTSTRTRMQKQRMNESKDVSNKEEK) are disordered. Basic and acidic residues predominate over residues 908–921 (RMNESKDVSNKEEK).

This sequence belongs to the retinoblastoma protein (RB) family. In terms of assembly, the hypophosphorylated form interacts with and sequesters the E2F1 transcription factor, thereby inhibiting E2F1 transcription. Interacts with heterodimeric E2F/DP transcription factor complexes containing TFDP1 and either E2F1/E2F, E2F3, E2F4 or E2F5, or TFDP2 and E2F4. Interacts (when hyperphosphorylated and hypophosphorylated) with PKP3; the interaction inhibits RB1 interaction with and repression of the transcription factor E2F1, potentially via sequestering RB1 to the cytoplasm. The unphosphorylated form interacts with EID1, ARID3B, KDM5A, SUV39H1, MJD2A/JHDM3A and THOC1. Interacts with the N-terminal domain of TAF1. Interacts with SNW1, ATAD5, AATF, DNMT1, LIN9, LMNA, KMT5B, KMT5C, PELP1, UHRF2, TMPO-alpha and USP4. Interacts with GRIP1 and UBR4. Interacts with ARID4A and KDM5B. Interacts with E4F1 and LIMD1. Interacts with SMARCA4/BRG1 and HDAC1. Interacts with USP4. Interacts (when methylated at Lys-853) with L3MBTL1. Binds to CDK1 and CDK2. Interacts with CHEK2; phosphorylates RB1. Interacts with PRMT2. Interacts with CEBPA. P-TEFB complex interacts with RB1; promotes phosphorylation of RB1. Interacts with RBBP9; the interaction disrupts RB1 binding to E2F1. Interacts with KAT2B/PCAF and EP300/P300. Interacts with PAX5. Interacts (phosphorylated and unphosphorylated) with BLCAP. May interact with NDC80. As to quaternary structure, (Microbial infection) Interacts with adenovirus E1a protein. (Microbial infection) Interacts with SV40 large T antigen. Post-translationally, phosphorylated. Phosphorylated by CDK6 and CDK4, and subsequently by CDK2 at Ser-561 in G1, thereby releasing E2F1 which is then able to activate cell growth. Dephosphorylated at the late M phase. Phosphorylation of threonine residues in domain C promotes interaction between the C-terminal domain C and the Pocket domain, and thereby inhibits interactions with heterodimeric E2F/DP transcription factor complexes. Dephosphorylated at Ser-788 by calcineruin upon calcium stimulation. CDK3/cyclin-C-mediated phosphorylation at Ser-800 and Ser-804 is required for G0-G1 transition. Phosphorylated by CDK1 and CDK2 upon TGFB1-mediated apoptosis. In terms of processing, monomethylation at Lys-803 by SMYD2 enhances phosphorylation at Ser-800 and Ser-804, and promotes cell cycle progression. Monomethylation at Lys-853 by SMYD2 promotes interaction with L3MBTL1. N-terminus is methylated by METTL11A/NTM1. Acetylated in the skin. Acetylation at Lys-866 and Lys-867 regulates subcellular localization during keratinocytes differentiation. In terms of tissue distribution, expressed in the cell nuclei of renal tubules, hepatocytes and skeletal muscles. Expressed in skin (at protein level).

Its subcellular location is the nucleus. The protein resides in the cytoplasm. Tumor suppressor that is a key regulator of the G1/S transition of the cell cycle. The hypophosphorylated form binds transcription regulators of the E2F family, preventing transcription of E2F-responsive genes. Both physically blocks E2Fs transactivating domain and recruits chromatin-modifying enzymes that actively repress transcription. Cyclin and CDK-dependent phosphorylation of RB1 induces its dissociation from E2Fs, thereby activating transcription of E2F responsive genes and triggering entry into S phase. RB1 also promotes the G0-G1 transition upon phosphorylation and activation by CDK3/cyclin-C. Directly involved in heterochromatin formation by maintaining overall chromatin structure and, in particular, that of constitutive heterochromatin by stabilizing histone methylation. Recruits and targets histone methyltransferases SUV39H1, KMT5B and KMT5C, leading to epigenetic transcriptional repression. Controls histone H4 'Lys-20' trimethylation. Inhibits the intrinsic kinase activity of TAF1. Mediates transcriptional repression by SMARCA4/BRG1 by recruiting a histone deacetylase (HDAC) complex to the c-FOS promoter. In resting neurons, transcription of the c-FOS promoter is inhibited by BRG1-dependent recruitment of a phospho-RB1-HDAC1 repressor complex. Upon calcium influx, RB1 is dephosphorylated by calcineurin, which leads to release of the repressor complex. The chain is Retinoblastoma-associated protein (Rb1) from Mus musculus (Mouse).